Here is a 28-residue protein sequence, read N- to C-terminus: Venom protein (28 aa).

Residues 1–28 (KEGYPDGQNGKKIPCAINDNISKTXEQA) are disordered. A compositionally biased stretch (polar residues) spans 19–28 (DNISKTXEQA).

In terms of tissue distribution, expressed by the venom gland.

The protein resides in the secreted. Causes symptoms of mild intoxication and transient paralysis in insects (A.domestica). The sequence is that of Venom protein from Rhopalurus junceus (Caribbean blue scorpion).